Reading from the N-terminus, the 121-residue chain is Large ribosomal subunit protein bL12 (121 aa).

Belongs to the bacterial ribosomal protein bL12 family. Homodimer. Part of the ribosomal stalk of the 50S ribosomal subunit. Forms a multimeric L10(L12)X complex, where L10 forms an elongated spine to which 2 to 4 L12 dimers bind in a sequential fashion. Binds GTP-bound translation factors.

Functionally, forms part of the ribosomal stalk which helps the ribosome interact with GTP-bound translation factors. Is thus essential for accurate translation. This Pseudomonas syringae pv. tomato (strain ATCC BAA-871 / DC3000) protein is Large ribosomal subunit protein bL12.